Here is a 418-residue protein sequence, read N- to C-terminus: Cobalt-zinc-cadmium resistance protein CzcC (418 aa).

The N-terminal stretch at 1 to 22 (MRRLFLPLGLAVAFLSPNFAVA) is a signal peptide.

It belongs to the outer membrane factor (OMF) (TC 1.B.17) family.

It localises to the cell outer membrane. CzcC protein appears to modify the specificity of the system, perhaps by acting on the CzcB protein. When the CzcC protein is added to CzcA and CzcB, the efflux system gains specificity for cadmium and cobalt. In Cupriavidus metallidurans (strain ATCC 43123 / DSM 2839 / NBRC 102507 / CH34) (Ralstonia metallidurans), this protein is Cobalt-zinc-cadmium resistance protein CzcC (czcC).